A 365-amino-acid chain; its full sequence is Spermine synthase (365 aa).

Ala2 carries the N-acetylalanine modification. Ser57 carries the phosphoserine modification. One can recognise a PABS domain in the interval 121 to 361 (RYWPTADGRL…ELWVFYTVWK (241 aa)). Gln147 lines the S-adenosyl 3-(methylsulfanyl)propylamine pocket. Positions 176 and 200 each coordinate spermidine. Residues Glu219 and 254 to 255 (DC) each bind S-adenosyl 3-(methylsulfanyl)propylamine. Asp275 acts as the Proton acceptor in catalysis. Spermidine contacts are provided by Tyr350 and Glu352.

The protein belongs to the spermidine/spermine synthase family. Homodimer. Dimerization is mediated through the N-terminal domain and seems to be required for activity as deletion of the N-terminal domain causes complete loss of activity.

It carries out the reaction S-adenosyl 3-(methylsulfanyl)propylamine + spermidine = spermine + S-methyl-5'-thioadenosine + H(+). It participates in amine and polyamine biosynthesis; spermine biosynthesis; spermine from spermidine: step 1/1. Its function is as follows. Catalyzes the production of spermine from spermidine and decarboxylated S-adenosylmethionine (dcSAM). The protein is Spermine synthase (SMS) of Bos taurus (Bovine).